Reading from the N-terminus, the 682-residue chain is Potassium-transporting ATPase ATP-binding subunit (682 aa).

The next 4 helical transmembrane spans lie at 34–54 (PVMFIVWIGSLLTTCISIAMA), 62–82 (ALFSAAISGWLWVTVLFANFA), 219–239 (IALTILLIALTIVFLLATATL), and 254–274 (VLVALLVCLIPTTIGGLLSAI). D307 acts as the 4-aspartylphosphate intermediate in catalysis. ATP-binding positions include D344, E348, 377 to 384 (FTAQSRMS), and K395. 2 residues coordinate Mg(2+): D518 and D522. 3 helical membrane passes run 588 to 608 (FAIIPAAFAATYPQLNALNIM), 616 to 636 (AILSAVIFNALIIVFLIPLAL), and 656 to 676 (IYGLGGLLVPFIGIKVIDLLL).

The protein belongs to the cation transport ATPase (P-type) (TC 3.A.3) family. Type IA subfamily. The system is composed of three essential subunits: KdpA, KdpB and KdpC.

The protein localises to the cell inner membrane. It carries out the reaction K(+)(out) + ATP + H2O = K(+)(in) + ADP + phosphate + H(+). In terms of biological role, part of the high-affinity ATP-driven potassium transport (or Kdp) system, which catalyzes the hydrolysis of ATP coupled with the electrogenic transport of potassium into the cytoplasm. This subunit is responsible for energy coupling to the transport system and for the release of the potassium ions to the cytoplasm. This chain is Potassium-transporting ATPase ATP-binding subunit, found in Escherichia fergusonii (strain ATCC 35469 / DSM 13698 / CCUG 18766 / IAM 14443 / JCM 21226 / LMG 7866 / NBRC 102419 / NCTC 12128 / CDC 0568-73).